Reading from the N-terminus, the 724-residue chain is Coiled-coil domain-containing protein 175 (724 aa).

Coiled coils occupy residues 131–164, 203–256, 282–373, 426–534, and 565–627; these read VEMSELHTKITRINDEIEFLKKKILHLQTDNTAL, INLE…RKET, VVLS…RQYK, ELHR…ERKL, and QLQV…QLRE.

In Bos taurus (Bovine), this protein is Coiled-coil domain-containing protein 175 (CCDC175).